A 303-amino-acid polypeptide reads, in one-letter code: Glycine--tRNA ligase alpha subunit (303 aa).

Belongs to the class-II aminoacyl-tRNA synthetase family. Tetramer of two alpha and two beta subunits.

It localises to the cytoplasm. It catalyses the reaction tRNA(Gly) + glycine + ATP = glycyl-tRNA(Gly) + AMP + diphosphate. The chain is Glycine--tRNA ligase alpha subunit from Erwinia tasmaniensis (strain DSM 17950 / CFBP 7177 / CIP 109463 / NCPPB 4357 / Et1/99).